The primary structure comprises 230 residues: Cytidylate kinase (230 aa).

An ATP-binding site is contributed by 12 to 20; it reads GPSGAGKGT.

This sequence belongs to the cytidylate kinase family. Type 1 subfamily.

It localises to the cytoplasm. It carries out the reaction CMP + ATP = CDP + ADP. It catalyses the reaction dCMP + ATP = dCDP + ADP. In Shewanella baltica (strain OS223), this protein is Cytidylate kinase.